A 157-amino-acid chain; its full sequence is Protein Smg homolog (157 aa).

This sequence belongs to the Smg family.

This Xanthomonas oryzae pv. oryzae (strain MAFF 311018) protein is Protein Smg homolog.